Reading from the N-terminus, the 166-residue chain is Endoribonuclease YbeY (166 aa).

Zn(2+) contacts are provided by H130, H134, and H140.

The protein belongs to the endoribonuclease YbeY family. Requires Zn(2+) as cofactor.

The protein localises to the cytoplasm. In terms of biological role, single strand-specific metallo-endoribonuclease involved in late-stage 70S ribosome quality control and in maturation of the 3' terminus of the 16S rRNA. This is Endoribonuclease YbeY from Streptococcus uberis (strain ATCC BAA-854 / 0140J).